Here is a 388-residue protein sequence, read N- to C-terminus: Chorismate synthase (388 aa).

2 residues coordinate NADP(+): arginine 39 and arginine 45. FMN-binding positions include 130–132, 251–252, glycine 296, 311–315, and arginine 337; these read RSS, NA, and KPIPT.

This sequence belongs to the chorismate synthase family. Homotetramer. FMNH2 is required as a cofactor.

The enzyme catalyses 5-O-(1-carboxyvinyl)-3-phosphoshikimate = chorismate + phosphate. It participates in metabolic intermediate biosynthesis; chorismate biosynthesis; chorismate from D-erythrose 4-phosphate and phosphoenolpyruvate: step 7/7. Functionally, catalyzes the anti-1,4-elimination of the C-3 phosphate and the C-6 proR hydrogen from 5-enolpyruvylshikimate-3-phosphate (EPSP) to yield chorismate, which is the branch point compound that serves as the starting substrate for the three terminal pathways of aromatic amino acid biosynthesis. This reaction introduces a second double bond into the aromatic ring system. The protein is Chorismate synthase of Streptococcus pyogenes serotype M28 (strain MGAS6180).